A 128-amino-acid chain; its full sequence is Small ribosomal subunit protein eS8 (128 aa).

This sequence belongs to the eukaryotic ribosomal protein eS8 family. As to quaternary structure, part of the 30S ribosomal subunit.

The chain is Small ribosomal subunit protein eS8 from Methanococcus maripaludis (strain C7 / ATCC BAA-1331).